A 548-amino-acid polypeptide reads, in one-letter code: Chaperonin GroEL 2 (548 aa).

ATP-binding positions include 30–33 (TLGP), Lys51, 87–91 (DGTTT), Gly415, and Asp496. Residues 529–548 (KDAMPSPDMGGMGGMGGMGF) form a disordered region. Residues 538-548 (GGMGGMGGMGF) are compositionally biased toward gly residues.

It belongs to the chaperonin (HSP60) family. As to quaternary structure, forms a cylinder of 14 subunits composed of two heptameric rings stacked back-to-back. Interacts with the co-chaperonin GroES.

It is found in the cytoplasm. It carries out the reaction ATP + H2O + a folded polypeptide = ADP + phosphate + an unfolded polypeptide.. Together with its co-chaperonin GroES, plays an essential role in assisting protein folding. The GroEL-GroES system forms a nano-cage that allows encapsulation of the non-native substrate proteins and provides a physical environment optimized to promote and accelerate protein folding. The polypeptide is Chaperonin GroEL 2 (Rhodospirillum rubrum (strain ATCC 11170 / ATH 1.1.1 / DSM 467 / LMG 4362 / NCIMB 8255 / S1)).